The following is a 1450-amino-acid chain: Protein clueless (1450 aa).

Disordered regions lie at residues 1 to 126 and 266 to 287; these read MALE…PGSE and KTRP…VSEP. A compositionally biased stretch (low complexity) spans 29–60; it reads NNSSAGKKQQQQQQPNQNQNLVNGNGNAADGP. Residues 62-71 show a composition bias toward basic residues; sequence AKKKGKKNRN. Ser-271 carries the phosphoserine modification. The region spanning 425-667 is the Clu domain; it reads RAEDAFSSKL…RTFPPDVNFL (243 aa). Composition is skewed to basic and acidic residues over residues 725–734 and 743–765; these read KQSEKTEEKA and KESS…EEKQ. Disordered stretches follow at residues 725 to 775 and 959 to 1011; these read KQSE…TKTA and PAVS…SDWT. A compositionally biased stretch (basic residues) spans 968–983; that stretch reads KKRSNGNKHNKHKSKG. Over residues 984-1008 the composition is skewed to low complexity; that stretch reads NKQQASGNQNGSSAGSSSGGSSSSS. 3 TPR repeats span residues 1102 to 1135, 1228 to 1261, and 1263 to 1296; these read AYNF…LNNV, ALID…NIKY, and GSKA…EKET. Residues 1410–1450 are disordered; the sequence is NNNGDTEAETKDATKDNKDLAGASTQLTNGDKDAETAVASS. Basic and acidic residues predominate over residues 1417–1428; sequence AETKDATKDNKD.

The protein belongs to the CLU family.

Its subcellular location is the cytoplasm. Functionally, mRNA-binding protein involved in proper cytoplasmic distribution of mitochondria. In Drosophila ananassae (Fruit fly), this protein is Protein clueless.